Here is a 398-residue protein sequence, read N- to C-terminus: Aspartic protease 3 (398 aa).

Residues 1 to 17 (MSGRVFLLLALVALASA) form the signal peptide. Positions 18 to 55 (IQRIKLEKRTYTREQYKFGSIQEHLKAKYVPGYIPNKD) are cleaved as a propeptide — removed in mature form. The region spanning 69–392 (YYGPVTIGTP…DHGNKRVGFA (324 aa)) is the Peptidase A1 domain. Aspartate 87 is a catalytic residue. A disulfide bridge links cysteine 100 with cysteine 107. Aspartate 279 is a catalytic residue. Cysteine 313 and cysteine 351 are joined by a disulfide. An N-linked (GlcNAc...) asparagine glycan is attached at asparagine 321.

Belongs to the peptidase A1 family. As to expression, highly expressed in intestine and to a lower extent in body wall muscles, hypodermis and neurons.

It localises to the cytoplasm. The protein resides in the lysosome. The protein localises to the secreted. Functionally, aspartic protease. Part of the necrosis cell death pathway. Involved in neuronal cell degeneration. Involved in heat stress response. This chain is Aspartic protease 3, found in Caenorhabditis elegans.